Reading from the N-terminus, the 544-residue chain is MAKDIKFSEDARHAMLRGVDALADAVKVTIGPKGRNVVLEKKFGSPLITNDGVTIAKEIELEDRFENMGAKLVAEVASKTNEVAGDGTTTATVLAQAMIREGLKNVTAGANPMILRKGIDKAVTRALEELKAISKPIESKEAIAQVAAISAADEEVGELIAEAMERVGNDGVITIEESRGFTTELDVVEGMQFDRGYLSPYMISDSDKMEASLDNPYILITDKKISNIQEIIPVLEQVVQQGKPILIVAEDIEGDALATLVLNKLRGTFNAVAVKAPGFGDRRKAMLEDLATLTGGQVITEDLGLDLKSASLDMLGRASKVVVTKDTTTVVEGAGNEETIKARVQTIRNQIEETTSDFDREKLQERLAKLAGGVAVVKVGAATETELKERKLRIEDALNATRAAVEEGIVAGGGTSLINVIPAVRALLSEVTADEATGVKLVLRALEAPVRQIAENAGEEGSVIVEKLKNESVGVGYNAATGEYVDMIAHGIVDPAKVTRSALQNAASVSAMFLTTEAVIADKPEKDAPAMPDMGGMGGMGGMM.

ATP-binding positions include 29-32 (TIGP), 86-90 (DGTTT), Gly413, 478-480 (NAA), and Asp494.

Belongs to the chaperonin (HSP60) family. As to quaternary structure, forms a cylinder of 14 subunits composed of two heptameric rings stacked back-to-back. Interacts with the co-chaperonin GroES.

It is found in the cytoplasm. The enzyme catalyses ATP + H2O + a folded polypeptide = ADP + phosphate + an unfolded polypeptide.. Together with its co-chaperonin GroES, plays an essential role in assisting protein folding. The GroEL-GroES system forms a nano-cage that allows encapsulation of the non-native substrate proteins and provides a physical environment optimized to promote and accelerate protein folding. This chain is Chaperonin GroEL, found in Exiguobacterium sp. (strain ATCC BAA-1283 / AT1b).